A 501-amino-acid chain; its full sequence is Glycerol kinase (501 aa).

ADP is bound at residue T11. Residues T11, T12, and S13 each contribute to the ATP site. Position 11 (T11) interacts with sn-glycerol 3-phosphate. R15 serves as a coordination point for ADP. R81, E82, Y133, and D242 together coordinate sn-glycerol 3-phosphate. Residues R81, E82, Y133, D242, and Q243 each contribute to the glycerol site. ADP-binding residues include T264 and G307. ATP contacts are provided by T264, G307, Q311, and G409. ADP-binding residues include G409 and N413.

Belongs to the FGGY kinase family.

It catalyses the reaction glycerol + ATP = sn-glycerol 3-phosphate + ADP + H(+). It participates in polyol metabolism; glycerol degradation via glycerol kinase pathway; sn-glycerol 3-phosphate from glycerol: step 1/1. With respect to regulation, inhibited by fructose 1,6-bisphosphate (FBP). Functionally, key enzyme in the regulation of glycerol uptake and metabolism. Catalyzes the phosphorylation of glycerol to yield sn-glycerol 3-phosphate. In Borreliella burgdorferi (strain ATCC 35210 / DSM 4680 / CIP 102532 / B31) (Borrelia burgdorferi), this protein is Glycerol kinase.